Here is a 121-residue protein sequence, read N- to C-terminus: UPF0102 protein VP0448 (121 aa).

This sequence belongs to the UPF0102 family.

This chain is UPF0102 protein VP0448, found in Vibrio parahaemolyticus serotype O3:K6 (strain RIMD 2210633).